The primary structure comprises 880 residues: Phosphoinositide 3-kinase regulatory subunit 5 (880 aa).

Residue Met1 is modified to N-acetylmethionine. Residues 25-101 (SLSRRSTSWS…TPHFPPDSDL (77 aa)) form a heterodimerization region. 4 disordered regions span residues 315-339 (GILG…TDGH), 389-416 (SGYV…GHRR), 454-510 (RRAG…SGDE), and 565-601 (HGTS…TPWE). Residues 318-335 (GDDEEEEEEEEEVEEDLE) are compositionally biased toward acidic residues. Ser458 and Ser507 each carry phosphoserine. A compositionally biased stretch (pro residues) spans 571–585 (ACPPPRSQTPSPPTD). Residues 653-753 (PILADMLLYY…WSNLEKVCTS (101 aa)) form an interaction with beta-gamma G protein dimers region.

As to quaternary structure, heterodimer of a catalytic subunit (PIK3CG/p120) and a regulatory (PIK3R5a/p101) subunit. Interacts with beta-gamma G protein dimers. Ubiquitously expressed with high expression in fetal brain compared to adult brain. Abundant expression is observed in cerebellum, cerebral cortex, cerebral meninges, and vermis cerebelli.

The protein resides in the nucleus. It localises to the cytoplasm. It is found in the cell membrane. Greatly activated by G gamma proteins. Its function is as follows. Regulatory subunit of the PI3K gamma complex. Required for recruitment of the catalytic subunit to the plasma membrane via interaction with beta-gamma G protein dimers. Required for G protein-mediated activation of PIK3CG. This is Phosphoinositide 3-kinase regulatory subunit 5 (PIK3R5) from Homo sapiens (Human).